Consider the following 571-residue polypeptide: Optineurin (571 aa).

Disordered regions lie at residues 1 to 32 and 100 to 144; these read MSHQ…HPNL and LSHE…DQLR. Residues 38-170 adopt a coiled-coil conformation; that stretch reads EELLQQMKEL…VSELQLKLNS (133 aa). Residues 58–209 are interaction with Rab8; sequence MKLNNQAMKG…GPTRTVSIGT (152 aa). Positions 100 to 143 are enriched in basic and acidic residues; that stretch reads LSHENEKLKEELGKLKGKSERSSEDPTDDSRLPRAEAEQEKDQL. The short motif at 176–181 is the LIR element; the sequence is DSFVEI. At S177 the chain carries Phosphoserine; by TBK1. The span at 186–197 shows a compositional bias: basic and acidic residues; that stretch reads GEAEGSVKEIKH. Disordered regions lie at residues 186–210 and 255–291; these read GEAE…IGTS and VSDF…TVGS. Phosphoserine is present on S198. A compositionally biased stretch (polar residues) spans 201–210; sequence PTRTVSIGTS. Positions 233-502 form a coiled coil; the sequence is CLREGNQKVE…LLKENDAFED (270 aa). Basic and acidic residues-rich tracts occupy residues 255-268 and 275-286; these read VSDF…RSEI and STEKENEEEKGP. S336 is subject to Phosphoserine. The segment at 405-571 is interaction with HD; that stretch reads TRKESEKVDR…LQIHVMDCII (167 aa). The interval 406 to 514 is interaction with MYO6; that stretch reads RKESEKVDRA…RQSLMEMQSR (109 aa). Positions 468 to 473 match the UBAN motif; that stretch reads DFHAER. At S520 the chain carries Phosphoserine. Residues 541–571 form a CCHC NOA-type zinc finger; sequence QRNIPIHSCPKCGEVLPDIDTLQIHVMDCII. Positions 549, 552, 565, and 569 each coordinate Zn(2+).

As to quaternary structure, self-associates. Interacts with HD. Interacts with GTF3A. Interacts with MYO6. Interacts (via UBAN) with ubiquitinated TFRC. Interacts with GTP-bound Rab8 (RAB8A and/or RAB8B). Interacts with TBC1D17. Interacts with TBK1. Interacts with TRAF3. Binds to linear ubiquitin chains. Interacts with LC3 family members MAP1LC3A, MAP1LC3B, GABARAP, GABARAPL1 and GABARAPL2; OPTN phosphorylation increases the association (at least with MAP1LC3B). Interacts with RAB12; the interaction may be indirect. Interacts with TBK1; this interaction leads to the Golgi localization of TBK1 and its subsequent activation. Interacts with palmitoyltransferase ZDHHC17/HIP14; the interaction does not lead to palmitoylation of OPTN. Interacts with CYLD. Interacts with TOM1; the interaction is indirect and is mediated by MYO6, which acts as a bridge between TOM1 and OPTN. Interacts with USP12; the interaction is independent of USP12 deubiquitinase activity and may be involved in regulation of autophagic flux. Post-translationally, phosphorylated by TBK1, leading to restrict bacterial proliferation in case of infection. Present in aqueous humor of the eye (at protein level).

The protein resides in the cytoplasm. The protein localises to the perinuclear region. It is found in the golgi apparatus. Its subcellular location is the trans-Golgi network. It localises to the cytoplasmic vesicle. The protein resides in the autophagosome. The protein localises to the recycling endosome. Functionally, plays an important role in the maintenance of the Golgi complex, in membrane trafficking, in exocytosis, through its interaction with myosin VI and Rab8. Links myosin VI to the Golgi complex and plays an important role in Golgi ribbon formation. Negatively regulates the induction of IFNB in response to RNA virus infection. Plays a neuroprotective role in the eye and optic nerve. Probably part of the TNF-alpha signaling pathway that can shift the equilibrium toward induction of cell death. May act by regulating membrane trafficking and cellular morphogenesis via a complex that contains Rab8 and huntingtin (HD). Mediates the interaction of Rab8 with the probable GTPase-activating protein TBC1D17 during Rab8-mediated endocytic trafficking, such as that of transferrin receptor (TFRC/TfR); regulates Rab8 recruitment to tubules emanating from the endocytic recycling compartment. Autophagy receptor that interacts directly with both the cargo to become degraded and an autophagy modifier of the MAP1 LC3 family; targets ubiquitin-coated bacteria (xenophagy) and appears to function in the same pathway as SQSTM1 and CALCOCO2/NDP52. The protein is Optineurin (OPTN) of Macaca mulatta (Rhesus macaque).